The primary structure comprises 424 residues: Serine--tRNA ligase (424 aa).

Thr-231–Glu-233 provides a ligand contact to L-serine. Arg-262–Glu-264 is an ATP binding site. Glu-285 is a binding site for L-serine. Position 349–352 (Glu-349–Ser-352) interacts with ATP. An L-serine-binding site is contributed by Ser-385.

The protein belongs to the class-II aminoacyl-tRNA synthetase family. Type-1 seryl-tRNA synthetase subfamily. In terms of assembly, homodimer. The tRNA molecule binds across the dimer.

It is found in the cytoplasm. It carries out the reaction tRNA(Ser) + L-serine + ATP = L-seryl-tRNA(Ser) + AMP + diphosphate + H(+). It catalyses the reaction tRNA(Sec) + L-serine + ATP = L-seryl-tRNA(Sec) + AMP + diphosphate + H(+). It participates in aminoacyl-tRNA biosynthesis; selenocysteinyl-tRNA(Sec) biosynthesis; L-seryl-tRNA(Sec) from L-serine and tRNA(Sec): step 1/1. Functionally, catalyzes the attachment of serine to tRNA(Ser). Is also able to aminoacylate tRNA(Sec) with serine, to form the misacylated tRNA L-seryl-tRNA(Sec), which will be further converted into selenocysteinyl-tRNA(Sec). This Marinobacter nauticus (strain ATCC 700491 / DSM 11845 / VT8) (Marinobacter aquaeolei) protein is Serine--tRNA ligase.